The primary structure comprises 331 residues: tRNA N6-adenosine threonylcarbamoyltransferase (331 aa).

Residues H109, H113, and Y130 each coordinate Fe cation. Residues Y130 to G134, D162, D183, and S262 contribute to the substrate site. D290 provides a ligand contact to Fe cation.

Belongs to the KAE1 / TsaD family. It depends on Fe(2+) as a cofactor.

It is found in the cytoplasm. It catalyses the reaction L-threonylcarbamoyladenylate + adenosine(37) in tRNA = N(6)-L-threonylcarbamoyladenosine(37) in tRNA + AMP + H(+). Its function is as follows. Required for the formation of a threonylcarbamoyl group on adenosine at position 37 (t(6)A37) in tRNAs that read codons beginning with adenine. Is probably involved in the transfer of the threonylcarbamoyl moiety of threonylcarbamoyl-AMP (TC-AMP) to the N6 group of A37. In Saccharolobus islandicus (strain Y.G.57.14 / Yellowstone #1) (Sulfolobus islandicus), this protein is tRNA N6-adenosine threonylcarbamoyltransferase.